The chain runs to 347 residues: MNEFMKKFSLTKPIIQAPMAGGITKPRLASAVSNQGALGSLASGYLTPDLLEQQIKEIFELTDAPFQINVFVPLGLEMPPKDQIKKWKENIPLANQVNQFTSVQEEWDDFYQKIDLILKYKVKACSFTFDLPPEDAVKELKTAGCCLIGTASTVEEALLMEERGMDIVVLQGSEAGGHRGAFLPSKGESAVGLMALIPQAADALSVPVIAAGGMIDHRGVKAALTLGAQGVQIGSAFLICHESNAHPVHKQKILEANEADTKLTTLFSGKEARGIVNKWMEENEQFETQTLPYPYQNTLTKAMRQKASLQNNHDQMSLWAGQGIRSLTEEISVKQLLNQLCQEDIKI.

Residues Asn-69, Gln-171, Gly-176, Gly-213, and 232-235 (QIGS) contribute to the FMN site.

The protein belongs to the nitronate monooxygenase family. NMO class I subfamily. FMN serves as cofactor.

It carries out the reaction 3 propionate 3-nitronate + 3 O2 + H2O = 3 3-oxopropanoate + 2 nitrate + nitrite + H2O2 + 3 H(+). Its function is as follows. Nitronate monooxygenase that uses molecular oxygen to catalyze the oxidative denitrification of alkyl nitronates. Acts on propionate 3-nitronate (P3N), the presumed physiological substrate. Probably functions in the detoxification of P3N, a metabolic poison produced by plants and fungi as a defense mechanism. The chain is Probable nitronate monooxygenase (yrpB) from Bacillus subtilis (strain 168).